The primary structure comprises 165 residues: Protein SprT (165 aa).

The 142-residue stretch at 22–163 folds into the SprT-like domain; that stretch reads LAQANLKLGR…RCVHCGEQLT (142 aa). His78 contacts Zn(2+). Glu79 is an active-site residue. His82 lines the Zn(2+) pocket.

Belongs to the SprT family. The cofactor is Zn(2+).

The protein localises to the cytoplasm. In Escherichia fergusonii (strain ATCC 35469 / DSM 13698 / CCUG 18766 / IAM 14443 / JCM 21226 / LMG 7866 / NBRC 102419 / NCTC 12128 / CDC 0568-73), this protein is Protein SprT.